A 118-amino-acid chain; its full sequence is uncharacterized protein (118 aa).

3 helical membrane-spanning segments follow: residues 6-26 (ILILLVIIITTYFTRIWPFMV), 43-63 (ALSCSVIGMLVVYCFKDIHVL), and 84-104 (IFKVFVLSITLPTILYMVLVQ).

Belongs to the AzlD/HI_1737/HP1330 family.

It is found in the cell membrane. This is an uncharacterized protein from Helicobacter pylori (strain J99 / ATCC 700824) (Campylobacter pylori J99).